Here is a 392-residue protein sequence, read N- to C-terminus: Acetyl-CoA acetyltransferase (392 aa).

Cysteine 87 serves as the catalytic Acyl-thioester intermediate. Active-site proton acceptor residues include histidine 348 and cysteine 378.

This sequence belongs to the thiolase-like superfamily. Thiolase family.

The protein resides in the cytoplasm. It carries out the reaction 2 acetyl-CoA = acetoacetyl-CoA + CoA. It participates in metabolic intermediate biosynthesis; (R)-mevalonate biosynthesis; (R)-mevalonate from acetyl-CoA: step 1/3. Involved in the production of polyhydroxyalkonic acids (PHAs), composed primarily of 3-hydroxybutyric acid (3HB) and 3-hydroxyvaleric acid (3HV). In Chromobacterium violaceum (strain ATCC 12472 / DSM 30191 / JCM 1249 / CCUG 213 / NBRC 12614 / NCIMB 9131 / NCTC 9757 / MK), this protein is Acetyl-CoA acetyltransferase (phaA).